A 359-amino-acid chain; its full sequence is 4-galactosyl-N-acetylglucosaminide 3-alpha-L-fucosyltransferase FUT6 (359 aa).

Topologically, residues 1 to 14 (MDPLGPAKTQWSWR) are cytoplasmic. Residues 15-34 (CCLTALLFQLLVAVCFFSYL) form a helical; Signal-anchor for type II membrane protein membrane-spanning segment. Residues 35–359 (RVSRDDPTVY…QTRSIAAWFT (325 aa)) lie on the Lumenal side of the membrane. Residues 73–112 (KPIALPRCSEMVPGTADCNITADRKVYPQADAVIVHHREV) are determines site-specific fucosylation. Asparagine 91, asparagine 153, and asparagine 184 each carry an N-linked (GlcNAc...) asparagine glycan.

This sequence belongs to the glycosyltransferase 10 family. Homodimer and monomer. Monomer (secreted form). In terms of processing, N-glycosylated. Post-translationally, proteolytic cleavage releases a secreted glycoform of 43 kDa.

It localises to the golgi apparatus. It is found in the golgi stack membrane. The protein resides in the secreted. The enzyme catalyses a beta-D-galactosyl-(1-&gt;4)-N-acetyl-beta-D-glucosaminyl derivative + GDP-beta-L-fucose = a beta-D-galactosyl-(1-&gt;4)-[alpha-L-fucosyl-(1-&gt;3)]-N-acetyl-beta-D-glucosaminyl derivative + GDP + H(+). The catalysed reaction is an N-acetyl-alpha-neuraminyl-(2-&gt;3)-beta-D-galactosyl-(1-&gt;4)-N-acetyl-beta-D-glucosaminyl derivative + GDP-beta-L-fucose = an alpha-Neu5Ac-(2-&gt;3)-beta-D-Gal-(1-&gt;4)-[alpha-L-Fuc-(1-&gt;3)]-beta-D-GlcNAc derivative + GDP + H(+). It carries out the reaction an alpha-Neu5Ac-(2-&gt;3)-beta-D-Gal-(1-&gt;4)-beta-D-GlcNAc-(1-&gt;3)-beta-D-Gal-(1-&gt;4)-[alpha-L-Fuc-(1-&gt;3)]-beta-D-GlcNAc derivative + GDP-beta-L-fucose = an alpha-Neu5Ac-(2-&gt;3)-beta-D-Gal-(1-&gt;4)-[alpha-L-Fuc-(1-&gt;3)]-beta-D-GlcNAc-(1-&gt;3)-beta-D-Gal-(1-&gt;4)-[alpha-L-Fuc-(1-&gt;3)]-beta-D-GlcNAc derivative + GDP + H(+). It catalyses the reaction a neolactoside nLc6Cer + GDP-beta-L-fucose = beta-D-Gal-(1-&gt;4)-[alpha-L-Fuc-(1-&gt;3)]-beta-D-GlcNAc-(1-&gt;3)-beta-D-Gal-(1-&gt;4)-beta-D-GlcNAc-(1-&gt;3)-beta-D-Gal-(1-&gt;4)-beta-D-Glc-(1&lt;-&gt;1')-Cer + GDP + H(+). The enzyme catalyses a neolactoside nLc6Cer + GDP-beta-L-fucose = beta-D-galactosyl-(1-&gt;4)-N-acetyl-beta-D-glucosaminyl-(1-&gt;3)-beta-D-galactosyl-(1-&gt;4)-[alpha-L-fucosyl-(1-&gt;3)]-N-acetyl-beta-D-glucosaminyl-(1-&gt;3)-beta-D-galactosyl-(1-&gt;4)-beta-D-glucosyl-(1&lt;-&gt;1')-ceramide + GDP + H(+). The catalysed reaction is a neolactoside VI(3)-alpha-NeuNAc-nLc6Cer + GDP-beta-L-fucose = a neolactoside VI(3)-alpha-NeuAc,V(3)-alphaFuc-nLc6Cer + GDP + H(+). It carries out the reaction beta-D-galactosyl-(1-&gt;4)-N-acetyl-D-glucosamine + GDP-beta-L-fucose = beta-D-galactosyl-(1-&gt;4)-[alpha-L-fucosyl-(1-&gt;3)]-N-acetyl-D-glucosamine + GDP + H(+). It catalyses the reaction N-acetyl-alpha-neuraminosyl-(2-&gt;3)-beta-D-galactosyl-(1-&gt;4)-N-acetyl-beta-D-glucosamine + GDP-beta-L-fucose = N-acetyl-alpha-neuraminosyl-(2-&gt;3)-beta-D-galactosyl-(1-&gt;4)-[alpha-L-fucosyl-(1-&gt;3)]-N-acetyl-beta-D-glucosamine + GDP + H(+). The enzyme catalyses lactose + GDP-beta-L-fucose = beta-D-galactosyl-(1-&gt;4)-[alpha-L-fucosyl-(1-&gt;3)]-D-glucose + GDP + H(+). The catalysed reaction is alpha-L-Fuc-(1-&gt;2)-beta-D-Gal-(1-&gt;4)-D-Glc + GDP-beta-L-fucose = alpha-L-Fuc-(1-&gt;2)-beta-D-Gal-(1-&gt;4)-[alpha-L-Fuc-(1-&gt;3)]-D-Glc + GDP + H(+). It carries out the reaction a beta-D-galactosyl-(1-&gt;4)-N-acetyl-beta-D-6-sulfooxy-glucosaminyl derivative + GDP-beta-L-fucose = a beta-D-galactosyl-(1-&gt;4)-[alpha-L-fucosyl-(1-&gt;3)]-N-acetyl-beta-D-6-sulfooxy-glucosaminyl derivative + GDP + H(+). It functions in the pathway protein modification; protein glycosylation. In terms of biological role, catalyzes the transfer of L-fucose, from a guanosine diphosphate-beta-L-fucose, to the N-acetyl glucosamine (GlcNAc) of a distal alpha2,3 sialylated lactosamine unit of a glycoprotein- or glycolipid-linked sialopolylactosamines chain or of a distal or internal lactosamine unit of a neutral glycoprotein- or glycolipid-linked polylactosamines chain through an alpha-1,3 glycosidic linkage and participates in surface expression of the sialyl Lewis X (sLe(x)), Lewis X (Le(x)) and non sialylated VIM2 determinants. Moreover transfers fucose to H-type 2 (Fucalpha1-2Galbeta1-4GlcNAc) chain acceptor substrates and participates in difucosylated sialyl Lewis x determinants. Also fucosylates a polylactosamine substrate having a 6 sulfate modification at the GlcNAc moiety and gives rise to sialyl and non-sialyl 6-sulfo lewis X. Does not have activity towards type 1 ((Galbeta1-3GlcNAc)) and H-type 1 chain (Fucalpha1-2Galbeta1-3GlcNAc) acceptors substrates. The sequence is that of 4-galactosyl-N-acetylglucosaminide 3-alpha-L-fucosyltransferase FUT6 from Pongo pygmaeus (Bornean orangutan).